A 433-amino-acid polypeptide reads, in one-letter code: ATP-dependent protease ATPase subunit HslU (433 aa).

ATP is bound by residues isoleucine 18, 60–65 (GVGKTE), aspartate 246, glutamate 311, and arginine 383.

It belongs to the ClpX chaperone family. HslU subfamily. In terms of assembly, a double ring-shaped homohexamer of HslV is capped on each side by a ring-shaped HslU homohexamer. The assembly of the HslU/HslV complex is dependent on binding of ATP.

The protein localises to the cytoplasm. ATPase subunit of a proteasome-like degradation complex; this subunit has chaperone activity. The binding of ATP and its subsequent hydrolysis by HslU are essential for unfolding of protein substrates subsequently hydrolyzed by HslV. HslU recognizes the N-terminal part of its protein substrates and unfolds these before they are guided to HslV for hydrolysis. The sequence is that of ATP-dependent protease ATPase subunit HslU from Cereibacter sphaeroides (strain ATCC 17025 / ATH 2.4.3) (Rhodobacter sphaeroides).